A 203-amino-acid chain; its full sequence is Glycerol-3-phosphate acyltransferase (203 aa).

6 helical membrane passes run 3-23, 61-81, 87-107, 118-138, 144-164, and 172-192; these read NLIL…LILA, ILTV…ASFL, VLWT…FLGF, GVLA…WFLV, ISSL…FIIH, and THAP…PNIV.

It belongs to the PlsY family. In terms of assembly, probably interacts with PlsX.

It is found in the cell inner membrane. It catalyses the reaction an acyl phosphate + sn-glycerol 3-phosphate = a 1-acyl-sn-glycero-3-phosphate + phosphate. It participates in lipid metabolism; phospholipid metabolism. Functionally, catalyzes the transfer of an acyl group from acyl-phosphate (acyl-PO(4)) to glycerol-3-phosphate (G3P) to form lysophosphatidic acid (LPA). This enzyme utilizes acyl-phosphate as fatty acyl donor, but not acyl-CoA or acyl-ACP. The protein is Glycerol-3-phosphate acyltransferase of Campylobacter concisus (strain 13826).